The following is a 123-amino-acid chain: Small ribosomal subunit protein uS12 (123 aa).

Asp-89 carries the 3-methylthioaspartic acid modification.

Belongs to the universal ribosomal protein uS12 family. Part of the 30S ribosomal subunit. Contacts proteins S8 and S17. May interact with IF1 in the 30S initiation complex.

Its function is as follows. With S4 and S5 plays an important role in translational accuracy. Interacts with and stabilizes bases of the 16S rRNA that are involved in tRNA selection in the A site and with the mRNA backbone. Located at the interface of the 30S and 50S subunits, it traverses the body of the 30S subunit contacting proteins on the other side and probably holding the rRNA structure together. The combined cluster of proteins S8, S12 and S17 appears to hold together the shoulder and platform of the 30S subunit. This chain is Small ribosomal subunit protein uS12, found in Bartonella tribocorum (strain CIP 105476 / IBS 506).